The sequence spans 271 residues: Glutamate racemase (271 aa).

Substrate contacts are provided by residues 10-11 (DS) and 42-43 (YG). Cys73 functions as the Proton donor/acceptor in the catalytic mechanism. 74–75 (NT) is a binding site for substrate. Cys183 (proton donor/acceptor) is an active-site residue. 184 to 185 (TH) is a binding site for substrate.

Belongs to the aspartate/glutamate racemases family.

It catalyses the reaction L-glutamate = D-glutamate. The protein operates within cell wall biogenesis; peptidoglycan biosynthesis. In terms of biological role, provides the (R)-glutamate required for cell wall biosynthesis. The sequence is that of Glutamate racemase from Lactococcus lactis subsp. cremoris (strain SK11).